The sequence spans 375 residues: Queuine tRNA-ribosyltransferase (375 aa).

Residue Asp90 is the Proton acceptor of the active site. Substrate is bound by residues 90–94, Asp144, Gln193, and Gly220; that span reads DSGGF. Residues 251–257 are RNA binding; sequence GVGTPED. The active-site Nucleophile is Asp270. Positions 275–279 are RNA binding; important for wobble base 34 recognition; the sequence is TRNAR. Cys308, Cys310, Cys313, and His339 together coordinate Zn(2+).

It belongs to the queuine tRNA-ribosyltransferase family. As to quaternary structure, homodimer. Within each dimer, one monomer is responsible for RNA recognition and catalysis, while the other monomer binds to the replacement base PreQ1. Zn(2+) is required as a cofactor.

The catalysed reaction is 7-aminomethyl-7-carbaguanine + guanosine(34) in tRNA = 7-aminomethyl-7-carbaguanosine(34) in tRNA + guanine. It functions in the pathway tRNA modification; tRNA-queuosine biosynthesis. Its function is as follows. Catalyzes the base-exchange of a guanine (G) residue with the queuine precursor 7-aminomethyl-7-deazaguanine (PreQ1) at position 34 (anticodon wobble position) in tRNAs with GU(N) anticodons (tRNA-Asp, -Asn, -His and -Tyr). Catalysis occurs through a double-displacement mechanism. The nucleophile active site attacks the C1' of nucleotide 34 to detach the guanine base from the RNA, forming a covalent enzyme-RNA intermediate. The proton acceptor active site deprotonates the incoming PreQ1, allowing a nucleophilic attack on the C1' of the ribose to form the product. After dissociation, two additional enzymatic reactions on the tRNA convert PreQ1 to queuine (Q), resulting in the hypermodified nucleoside queuosine (7-(((4,5-cis-dihydroxy-2-cyclopenten-1-yl)amino)methyl)-7-deazaguanosine). This is Queuine tRNA-ribosyltransferase from Herminiimonas arsenicoxydans.